A 278-amino-acid chain; its full sequence is Non-haem bromoperoxidase BPO-A2 (278 aa).

The region spanning 26–264 (PVVLIHGFPL…GAPHGLLWTH (239 aa)) is the AB hydrolase-1 domain. Residues Ser-99, Asp-229, and His-258 contribute to the active site.

It belongs to the AB hydrolase superfamily. Bacterial non-heme haloperoxidase / perhydrolase family. Homotrimer.

May be a chlorinating enzyme involved in 7-chlorotetracycline biosynthesis. The chain is Non-haem bromoperoxidase BPO-A2 (bpoA2) from Kitasatospora aureofaciens (Streptomyces aureofaciens).